The following is a 163-amino-acid chain: MLKRSSWLATLLGLLTVASVSTIVYAIELDEATRTVPLESSGRTVVLTPEQVKRGKRLFNNSCAICHNGGITKTNPNVGLDPESLGLATPQRDNIEALVDYMKDPTSYDGAESIAELHPSIKSAEIFPKMRNLTDEDLFTIAGHILLQPKIVSEKWGGGKIYY.

The first 26 residues, 1-26, serve as a signal peptide directing secretion; that stretch reads MLKRSSWLATLLGLLTVASVSTIVYA. The heme c site is built by C63, C66, H67, and H118.

Belongs to the cytochrome c family. PsbV subfamily. As to quaternary structure, PSII is composed of 1 copy each of membrane proteins PsbA, PsbB, PsbC, PsbD, PsbE, PsbF, PsbH, PsbI, PsbJ, PsbK, PsbL, PsbM, PsbT, PsbY, PsbZ, Psb30/Ycf12, at least 3 peripheral proteins of the oxygen-evolving complex and a large number of cofactors. It forms dimeric complexes. The extrinsic subunits in red algae are PsbO (OEC33), PsbQ', cytochrome c-550 and PsbU. It depends on heme c as a cofactor.

The protein resides in the plastid. Its subcellular location is the chloroplast thylakoid membrane. In terms of biological role, one of the extrinsic, lumenal subunits of photosystem II (PSII). PSII is a light-driven water plastoquinone oxidoreductase, using light energy to abstract electrons from H(2)O, generating a proton gradient subsequently used for ATP formation. The extrinsic proteins stabilize the structure of photosystem II oxygen-evolving complex (OEC), the ion environment of oxygen evolution and protect the OEC against heat-induced inactivation. The polypeptide is Photosystem II extrinsic protein V (Porphyra purpurea (Red seaweed)).